A 427-amino-acid polypeptide reads, in one-letter code: MRPILLPDPPSLSTGVPDIFEQGGSHNVVRRAVVIGNGFPGSENQCIGLVRALGLSDNHLLYRVTRPKGGLNEWLHWLPVGFHKKLDFILRHIYLYSRLMLGSKQSKYISSVPSENGGNVGLASILEADVKGIVNLARQTYEKDGPLIVIACGRDTISIASSIRRLASENVFVVQIQHPRSHLNRFDMVITPRHDYYPLTLEAQEQVPRFMRSWITPREPPQDHVVLTTGALHQIDYASLRKAASAWHDEFAALPKPLVVVNIGWPRSNCRYGADLAKQLTDSLLNVLATCGSVRITLSYKTPAKVSRVIFKELGDNPKVYIWNGQEPNPYMGHLAWGDAFVVTADSVSLISEACSTGKPVYVVGADHCKWKIAEFQKSLRERGVVRSFTGFEDMSESWSYPPLNDTAEAATRIRRELAARGWSLRS.

In terms of assembly, interacts with DRP3 and DRP3B.

It localises to the mitochondrion outer membrane. In terms of biological role, plant-specific factor involved in mitochondria fission. Is required for the correct localization of DRP3A from the cytosol to mitochondrial fission sites. Does not seem to be required for peroxisomal division. The sequence is that of Mitochondrial fission protein ELM1 (ELM1) from Arabidopsis thaliana (Mouse-ear cress).